A 524-amino-acid chain; its full sequence is Apoptosis inhibitor 5-A (524 aa).

Residues 1-360 form an ARM-like and Heat-like helical repeats region; that stretch reads MATVEELYRS…HQLGRKLPDF (360 aa). The interval 440–524 is disordered; it reads TLSWKPVQRT…RGNRSRGRIY (85 aa). A Nuclear localization signal motif is present at residues 455-476; sequence KRTSDETSSTSPPKKPIVGPKR. A compositionally biased stretch (gly residues) spans 503–516; the sequence is GFQGGRGRGWGGRG.

This sequence belongs to the API5 family. In terms of assembly, monomer.

Its subcellular location is the nucleus. In terms of biological role, may be an antiapoptotic factor. The chain is Apoptosis inhibitor 5-A (api5-a) from Xenopus laevis (African clawed frog).